The following is a 588-amino-acid chain: Aspartate--tRNA ligase (588 aa).

Position 177 (Glu-177) interacts with L-aspartate. Positions 201–204 are aspartate; the sequence is QIFK. Arg-223 lines the L-aspartate pocket. ATP-binding positions include 223-225 and Gln-232; that span reads RDE. His-451 contacts L-aspartate. Glu-485 provides a ligand contact to ATP. Position 492 (Arg-492) interacts with L-aspartate. 537–540 serves as a coordination point for ATP; the sequence is GLDR.

This sequence belongs to the class-II aminoacyl-tRNA synthetase family. Type 1 subfamily. In terms of assembly, homodimer.

Its subcellular location is the cytoplasm. The enzyme catalyses tRNA(Asp) + L-aspartate + ATP = L-aspartyl-tRNA(Asp) + AMP + diphosphate. Its function is as follows. Catalyzes the attachment of L-aspartate to tRNA(Asp) in a two-step reaction: L-aspartate is first activated by ATP to form Asp-AMP and then transferred to the acceptor end of tRNA(Asp). The protein is Aspartate--tRNA ligase of Staphylococcus saprophyticus subsp. saprophyticus (strain ATCC 15305 / DSM 20229 / NCIMB 8711 / NCTC 7292 / S-41).